Here is a 58-residue protein sequence, read N- to C-terminus: ATP synthase subunit a (58 aa).

The next 2 helical transmembrane spans lie at 11 to 31 (EIFY…LTGL) and 35 to 55 (VAIL…NDAI).

Belongs to the ATPase A chain family. In terms of assembly, F-type ATPases have 2 components, CF(1) - the catalytic core - and CF(0) - the membrane proton channel. CF(1) has five subunits: alpha(3), beta(3), gamma(1), delta(1), epsilon(1). CF(0) has three main subunits: a, b and c.

Its subcellular location is the mitochondrion inner membrane. In terms of biological role, mitochondrial membrane ATP synthase (F(1)F(0) ATP synthase or Complex V) produces ATP from ADP in the presence of a proton gradient across the membrane which is generated by electron transport complexes of the respiratory chain. F-type ATPases consist of two structural domains, F(1) - containing the extramembraneous catalytic core and F(0) - containing the membrane proton channel, linked together by a central stalk and a peripheral stalk. During catalysis, ATP synthesis in the catalytic domain of F(1) is coupled via a rotary mechanism of the central stalk subunits to proton translocation. Key component of the proton channel; it may play a direct role in the translocation of protons across the membrane. This is ATP synthase subunit a (ATP6) from Brassica tournefortii (Wild turnip).